Here is a 469-residue protein sequence, read N- to C-terminus: Putative dipeptidase SH1171 (469 aa).

His84 serves as a coordination point for Zn(2+). Residue Asp86 is part of the active site. Zn(2+) is bound at residue Asp115. Residue Glu149 is the Proton acceptor of the active site. Zn(2+) is bound by residues Glu150, Asp173, and His440.

This sequence belongs to the peptidase M20A family. The cofactor is Zn(2+).

The protein is Putative dipeptidase SH1171 of Staphylococcus haemolyticus (strain JCSC1435).